The sequence spans 108 residues: DNA-binding protein HBbu (108 aa).

This sequence belongs to the bacterial histone-like protein family.

Functionally, histone-like DNA-binding protein which is capable of wrapping DNA to stabilize it, and thus to prevent its denaturation under extreme environmental conditions. This Borreliella japonica (Borrelia japonica) protein is DNA-binding protein HBbu (hbb).